A 1040-amino-acid polypeptide reads, in one-letter code: FHF complex subunit HOOK-interacting protein 1A (1040 aa).

Disordered stretches follow at residues proline 555–proline 613, serine 653–proline 746, and leucine 769–glutamate 808. Positions serine 653–alanine 664 are enriched in basic and acidic residues. Over residues valine 677–glutamate 690 the composition is skewed to polar residues. Composition is skewed to basic and acidic residues over residues glutamate 696–glutamate 719 and threonine 783–leucine 804.

The protein belongs to the FHIP family. May be a component of the FTS/Hook/FHIP complex (FHF complex), composed of AKTIP/FTS, FHIP1B, and one or more members of the Hook family of proteins HOOK1, HOOK2, and HOOK3. May interact directly with AKTIP/FTS.

Its function is as follows. Probable component of the FTS/Hook/FHIP complex (FHF complex). FHF complex promotes the distribution of AP-4 complex to the perinuclear area of the cell. In Homo sapiens (Human), this protein is FHF complex subunit HOOK-interacting protein 1A.